We begin with the raw amino-acid sequence, 359 residues long: Chorismate synthase (359 aa).

R47 provides a ligand contact to NADP(+). FMN contacts are provided by residues 123-125 (RSS), G283, 298-302 (KPTSS), and R326.

It belongs to the chorismate synthase family. Homotetramer. FMNH2 serves as cofactor.

The enzyme catalyses 5-O-(1-carboxyvinyl)-3-phosphoshikimate = chorismate + phosphate. Its pathway is metabolic intermediate biosynthesis; chorismate biosynthesis; chorismate from D-erythrose 4-phosphate and phosphoenolpyruvate: step 7/7. Catalyzes the anti-1,4-elimination of the C-3 phosphate and the C-6 proR hydrogen from 5-enolpyruvylshikimate-3-phosphate (EPSP) to yield chorismate, which is the branch point compound that serves as the starting substrate for the three terminal pathways of aromatic amino acid biosynthesis. This reaction introduces a second double bond into the aromatic ring system. In Chlamydia caviae (strain ATCC VR-813 / DSM 19441 / 03DC25 / GPIC) (Chlamydophila caviae), this protein is Chorismate synthase.